We begin with the raw amino-acid sequence, 302 residues long: Citrate lyase subunit beta (302 aa).

Arg76 and Glu139 together coordinate substrate. Residues Glu139 and Asp166 each contribute to the Mg(2+) site.

It belongs to the HpcH/HpaI aldolase family. Citrate lyase beta subunit subfamily. In terms of assembly, oligomer with a subunit composition of (alpha,beta,gamma)6. Mg(2+) is required as a cofactor.

The protein localises to the cytoplasm. It carries out the reaction citrate = oxaloacetate + acetate. It catalyses the reaction (3S)-citryl-CoA = oxaloacetate + acetyl-CoA. Represents a citryl-ACP lyase. The polypeptide is Citrate lyase subunit beta (citE) (Escherichia coli O6:H1 (strain CFT073 / ATCC 700928 / UPEC)).